The sequence spans 320 residues: NADH-ubiquinone oxidoreductase chain 1 (320 aa).

8 consecutive transmembrane segments (helical) span residues 3–23, 72–92, 103–123, 147–167, 174–194, 226–246, 255–275, and 295–315; these read LITIINPLTYIVPILIAVAFL, ILLILSPVLALTMAMLIWTPI, LGFLSILAISSMAVNSILWAG, VTLGIILLSILILTGGFTMQL, HIWLLATSWPLMMMWFISTLA, FFLAEYANIISMNLLTCILFI, ELFLINLITKTMILTLTFLWI, and FLPLTMALCLLHVSLLISISG.

Belongs to the complex I subunit 1 family.

The protein resides in the mitochondrion inner membrane. It carries out the reaction a ubiquinone + NADH + 5 H(+)(in) = a ubiquinol + NAD(+) + 4 H(+)(out). Its function is as follows. Core subunit of the mitochondrial membrane respiratory chain NADH dehydrogenase (Complex I) that is believed to belong to the minimal assembly required for catalysis. Complex I functions in the transfer of electrons from NADH to the respiratory chain. The immediate electron acceptor for the enzyme is believed to be ubiquinone. The sequence is that of NADH-ubiquinone oxidoreductase chain 1 (MT-ND1) from Varanus jobiensis (Peach throat monitor).